Reading from the N-terminus, the 417-residue chain is Indole-3-pyruvate monooxygenase YUCCA6 (417 aa).

Residue 36–41 participates in FAD binding; it reads GAGPSG. 204–209 is a binding site for NADP(+); sequence GCGNSG.

This sequence belongs to the FMO family. The cofactor is FAD. In terms of tissue distribution, highly expressed in roots but modestly expressed in the cauline leaves and flowers. Expressed in anthers.

The protein resides in the cytoplasm. It carries out the reaction indole-3-pyruvate + NADPH + O2 + H(+) = (indol-3-yl)acetate + CO2 + NADP(+) + H2O. It participates in plant hormone metabolism; auxin biosynthesis. Its function is as follows. Involved in auxin biosynthesis via the indole-3-pyruvic acid (IPA) pathway. Also able to convert in vitro phenyl pyruvate (PPA) to phenyl acetic acid (PAA). Required for the formation of floral organs and vascular tissues. Belongs to the set of redundant YUCCA genes probably responsible for auxin biosynthesis in shoots. This chain is Indole-3-pyruvate monooxygenase YUCCA6 (YUC6), found in Arabidopsis thaliana (Mouse-ear cress).